We begin with the raw amino-acid sequence, 340 residues long: Ferrochelatase (340 aa).

Fe cation-binding residues include H189 and E292.

Belongs to the ferrochelatase family.

It is found in the cytoplasm. The enzyme catalyses heme b + 2 H(+) = protoporphyrin IX + Fe(2+). It participates in porphyrin-containing compound metabolism; protoheme biosynthesis; protoheme from protoporphyrin-IX: step 1/1. Its function is as follows. Catalyzes the ferrous insertion into protoporphyrin IX. The polypeptide is Ferrochelatase (Pseudomonas aeruginosa (strain LESB58)).